We begin with the raw amino-acid sequence, 573 residues long: Pentatricopeptide repeat-containing protein At3g62890 (573 aa).

PPR repeat units follow at residues 23-60 (ESFLWNIIIRAIVHNVSSPQRHSPISVYLRMRNHRVSP), 61-95 (DFHTFPFLLPSFHNPLHLPLGQRTHAQILLFGLDK), 96-126 (DPFVRTSLLNMYSSCGDLRSAQRVFDDSGSK), 127-161 (DLPAWNSVVNAYAKAGLIDDARKLFDEMPERNVIS), 162-188 (WSCLINGYVMCGKYKEALDLFREMQLP), 198-232 (NEFTMSTVLSACGRLGALEQGKWVHAYIDKYHVEI), 233-263 (DIVLGTALIDMYAKCGSLERAKRVFNALGSK), 265-295 (DVKAYSAMICCLAMYGLTDECFQLFSEMTTS), 301-336 (NSVTFVGILGACVHRGLINEGKSYFKMMIEEFGITP), and 337-367 (SIQHYGCMVDLYGRSGLIKEAESFIASMPME). The tract at residues 372 to 447 (IWGSLLSGSR…VPGCSYVEVE (76 aa)) is type E motif; degenerate. The interval 448-478 (GVVHEFVVGDESQQESERIYAMLDEIMQRLR) is type E(+) motif. The interval 479 to 573 (EAGYVTDTKE…DGSCSCRDFW (95 aa)) is type DYW motif.

The protein belongs to the PPR family. PCMP-H subfamily.

The chain is Pentatricopeptide repeat-containing protein At3g62890 (PCMP-H82) from Arabidopsis thaliana (Mouse-ear cress).